Here is a 512-residue protein sequence, read N- to C-terminus: Histidine ammonia-lyase (512 aa).

The 5-imidazolinone (Ala-Gly) cross-link spans 142-144 (ASG). A 2,3-didehydroalanine (Ser) modification is found at serine 143.

Belongs to the PAL/histidase family. Post-translationally, contains an active site 4-methylidene-imidazol-5-one (MIO), which is formed autocatalytically by cyclization and dehydration of residues Ala-Ser-Gly.

Its subcellular location is the cytoplasm. It catalyses the reaction L-histidine = trans-urocanate + NH4(+). It functions in the pathway amino-acid degradation; L-histidine degradation into L-glutamate; N-formimidoyl-L-glutamate from L-histidine: step 1/3. The protein is Histidine ammonia-lyase of Allorhizobium ampelinum (strain ATCC BAA-846 / DSM 112012 / S4) (Agrobacterium vitis (strain S4)).